We begin with the raw amino-acid sequence, 420 residues long: Glucose-1-phosphate adenylyltransferase (420 aa).

Alpha-D-glucose 1-phosphate-binding positions include Tyr-107, Gly-173, 188–189 (EK), and Ser-206.

This sequence belongs to the bacterial/plant glucose-1-phosphate adenylyltransferase family. Homotetramer.

It catalyses the reaction alpha-D-glucose 1-phosphate + ATP + H(+) = ADP-alpha-D-glucose + diphosphate. It participates in glycan biosynthesis; glycogen biosynthesis. Involved in the biosynthesis of ADP-glucose, a building block required for the elongation reactions to produce glycogen. Catalyzes the reaction between ATP and alpha-D-glucose 1-phosphate (G1P) to produce pyrophosphate and ADP-Glc. In Shewanella sp. (strain W3-18-1), this protein is Glucose-1-phosphate adenylyltransferase.